The primary structure comprises 516 residues: Glycerol-3-phosphate dehydrogenase 1 (516 aa).

28–56 (DVIVIGGGITGVGIALDAATRGLTVALVE) lines the FAD pocket.

The protein belongs to the FAD-dependent glycerol-3-phosphate dehydrogenase family. FAD is required as a cofactor.

The protein resides in the cytoplasm. It catalyses the reaction a quinone + sn-glycerol 3-phosphate = dihydroxyacetone phosphate + a quinol. The polypeptide is Glycerol-3-phosphate dehydrogenase 1 (glpD1) (Mycobacterium bovis (strain ATCC BAA-935 / AF2122/97)).